Consider the following 144-residue polypeptide: MSIRERLLATVSQYIAAYNEFDPSAMKTVRTPTCLSHGIAPTCKFTQSVEEHTRHMMLSRGVFRSVNASIVDDDTTVVDEVSRHVVVKVKIRCETTVGPYENEAIFIMAMDEEGALVDGIFQFLDTARFQQFQGRLDEAQESKN.

The protein belongs to the trt14 isomerase family. In terms of assembly, homodimer.

The protein operates within secondary metabolite biosynthesis; terpenoid biosynthesis. Its function is as follows. Part of the gene cluster B that mediates the biosynthesis of the fungal meroterpenoid acetoxydehydroaustin. The first step of the pathway is the synthesis of 3,5-dimethylorsellinic acid by the polyketide synthase ausA. 3,5-dimethylorsellinic acid is then prenylated by the polyprenyl transferase ausN. Further epoxidation by the FAD-dependent monooxygenase ausM and cyclization by the probable terpene cyclase ausL lead to the formation of protoaustinoid A. Protoaustinoid A is then oxidized to spiro-lactone preaustinoid A3 by the combined action of the FAD-binding monooxygenases ausB and ausC, and the dioxygenase ausE. Acid-catalyzed keto-rearrangement and ring contraction of the tetraketide portion of preaustinoid A3 by ausJ lead to the formation of preaustinoid A4. The aldo-keto reductase ausK, with the help of ausH, is involved in the next step by transforming preaustinoid A4 into isoaustinone which is in turn hydroxylated by the P450 monooxygenase ausI to form austinolide. The cytochrome P450 monooxygenase ausG then modifies austinolide to austinol. Austinol is further acetylated to austin by the O-acetyltransferase ausP, which spontaneously changes to dehydroaustin. The cytochrome P450 monooxygenase then converts dehydroaustin is into 7-dehydrodehydroaustin. The hydroxylation catalyzed by ausR permits the second O-acetyltransferase ausQ to add an additional acetyl group to the molecule, leading to the formation of acetoxydehydroaustin. Due to genetic rearrangements of the clusters and the subsequent loss of some enzymes, the end product of the Penicillium brasilianum austinoid biosynthesis clusters is acetoxydehydroaustin. AusS is necessary for austinoids production and may play a possible function as a regulator. The polypeptide is Austinoid biosynthesis clusters protein S (Penicillium brasilianum).